Here is a 216-residue protein sequence, read N- to C-terminus: 3-isopropylmalate dehydratase small subunit (216 aa).

It belongs to the LeuD family. LeuD type 1 subfamily. As to quaternary structure, heterodimer of LeuC and LeuD.

The enzyme catalyses (2R,3S)-3-isopropylmalate = (2S)-2-isopropylmalate. The protein operates within amino-acid biosynthesis; L-leucine biosynthesis; L-leucine from 3-methyl-2-oxobutanoate: step 2/4. In terms of biological role, catalyzes the isomerization between 2-isopropylmalate and 3-isopropylmalate, via the formation of 2-isopropylmaleate. The polypeptide is 3-isopropylmalate dehydratase small subunit (Burkholderia thailandensis (strain ATCC 700388 / DSM 13276 / CCUG 48851 / CIP 106301 / E264)).